The primary structure comprises 398 residues: tRNA-specific 2-thiouridylase MnmA (398 aa).

Residues 20–27 and Leu-46 contribute to the ATP site; that span reads AMSGGVDS. Cys-114 (nucleophile) is an active-site residue. Cys-114 and Cys-210 are disulfide-bonded. An ATP-binding site is contributed by Gly-138. The interaction with tRNA stretch occupies residues 160–162; the sequence is RDQ. Cys-210 serves as the catalytic Cysteine persulfide intermediate.

This sequence belongs to the MnmA/TRMU family.

The protein resides in the cytoplasm. The catalysed reaction is S-sulfanyl-L-cysteinyl-[protein] + uridine(34) in tRNA + AH2 + ATP = 2-thiouridine(34) in tRNA + L-cysteinyl-[protein] + A + AMP + diphosphate + H(+). Catalyzes the 2-thiolation of uridine at the wobble position (U34) of tRNA, leading to the formation of s(2)U34. The sequence is that of tRNA-specific 2-thiouridylase MnmA from Brucella melitensis biotype 1 (strain ATCC 23456 / CCUG 17765 / NCTC 10094 / 16M).